The following is a 154-amino-acid chain: Transcriptional repressor NrdR (154 aa).

A disordered region spans residues 1–22; that stretch reads MECPNCHKNASRVIDSRPSDEN. Residues 3 to 34 fold into a zinc finger; sequence CPNCHKNASRVIDSRPSDENRAIRRRRECENC. Residues 49–139 enclose the ATP-cone domain; it reads LLVVKNDGTR…IYRQFKDVSG (91 aa).

The protein belongs to the NrdR family. Requires Zn(2+) as cofactor.

Negatively regulates transcription of bacterial ribonucleotide reductase nrd genes and operons by binding to NrdR-boxes. The protein is Transcriptional repressor NrdR of Lactobacillus johnsonii (strain CNCM I-12250 / La1 / NCC 533).